The sequence spans 171 residues: Photosystem I assembly protein Ycf3 (171 aa).

TPR repeat units follow at residues A35–P68, S72–L105, and G120–N153.

It belongs to the Ycf3 family.

It is found in the plastid. The protein localises to the chloroplast thylakoid membrane. Its function is as follows. Essential for the assembly of the photosystem I (PSI) complex. May act as a chaperone-like factor to guide the assembly of the PSI subunits. The sequence is that of Photosystem I assembly protein Ycf3 from Psilotum nudum (Whisk fern).